The following is a 570-amino-acid chain: Enhancer of polycomb-like protein 1 (570 aa).

The segment at 541–570 (ALNNLNSGQTSGQTMGSNPGPGAIAPTPET) is disordered. A compositionally biased stretch (polar residues) spans 543-557 (NNLNSGQTSGQTMGS).

This sequence belongs to the enhancer of polycomb family. In terms of assembly, component of the NuA4 histone acetyltransferase complex.

Its subcellular location is the nucleus. In terms of biological role, component of the NuA4 histone acetyltransferase complex which is involved in transcriptional activation of selected genes principally by acetylation of nucleosomal histone H4 and H2A. The NuA4 complex is also involved in DNA repair. Involved in gene silencing by neighboring heterochromatin, blockage of the silencing spreading along the chromosome, and required for cell cycle progression through G2/M. This Emericella nidulans (strain FGSC A4 / ATCC 38163 / CBS 112.46 / NRRL 194 / M139) (Aspergillus nidulans) protein is Enhancer of polycomb-like protein 1 (epl1).